Here is a 170-residue protein sequence, read N- to C-terminus: Cytochrome bc1 complex Rieske iron-sulfur subunit (170 aa).

The region spanning 63-153 is the Rieske domain; it reads KAALMIIRLE…IGVNDEGYLE (91 aa). Residues C96, H98, C115, and H118 each coordinate [2Fe-2S] cluster. C101 and C117 form a disulfide bridge.

In terms of assembly, the cytochrome bc1 complex is composed of a cytochrome b (QcrB), the Rieske iron-sulfur protein (QcrA) and a diheme cytochrome c (QcrC) subunit. The cofactor is [2Fe-2S] cluster.

It is found in the cell membrane. Iron-sulfur subunit of the cytochrome bc1 complex, an essential component of the respiratory electron transport chain required for ATP synthesis. The bc1 complex catalyzes the oxidation of menaquinol and the reduction of cytochrome c in the respiratory chain. The bc1 complex operates through a Q-cycle mechanism that couples electron transfer to generation of the proton gradient that drives ATP synthesis. This Streptomyces lividans protein is Cytochrome bc1 complex Rieske iron-sulfur subunit (qcrA).